Consider the following 741-residue polypeptide: Moderate conductance mechanosensitive channel YbiO (741 aa).

The signal sequence occupies residues 1–18; the sequence is MRWILFILFCLLGAPAHA. Residues 22-42 form a disordered region; sequence PGVTTTTTTDSTTEPAPEPDI. The segment covering 25–34 has biased composition (low complexity); the sequence is TTTTTTDSTT. The next 11 membrane-spanning stretches (helical) occupy residues 143 to 163, 185 to 205, 225 to 245, 268 to 288, 294 to 314, 343 to 363, 372 to 392, 432 to 452, 466 to 486, 509 to 529, and 533 to 553; these read MLAV…LPLY, AMII…LFVG, LFLN…LIFC, LSWL…IISN, IGAL…LYLI, FALV…FFSL, FMMG…FVSG, ILTV…FDFW, ILIR…VLAS, LLTL…IMIV, and IGVN…AISF.

The protein belongs to the MscS (TC 1.A.23) family. In terms of assembly, homoheptamer.

The protein localises to the cell inner membrane. Functionally, mechanosensitive channel that protects cells against hypoosmotic stress when highly overexpressed. The sequence is that of Moderate conductance mechanosensitive channel YbiO (ybiO) from Escherichia coli (strain K12).